Here is a 324-residue protein sequence, read N- to C-terminus: Elongation factor Ts, mitochondrial (324 aa).

The N-terminal 44 residues, 1–44, are a transit peptide targeting the mitochondrion; it reads MSLLRSLRFFPVACTGRSARAVLLQPSQPWLTFHAGPSLSSAAS. N6-succinyllysine occurs at positions 75, 132, and 191. Serine 269 carries the post-translational modification Phosphoserine.

Belongs to the EF-Ts family.

It is found in the mitochondrion. Associates with the EF-Tu.GDP complex and induces the exchange of GDP to GTP. It remains bound to the aminoacyl-tRNA.EF-Tu.GTP complex up to the GTP hydrolysis stage on the ribosome. In Mus musculus (Mouse), this protein is Elongation factor Ts, mitochondrial (Tsfm).